Reading from the N-terminus, the 373-residue chain is Putative C-P lyase subunit protein HtxH (373 aa).

Belongs to the PhnI family.

Its function is as follows. Belongs to an operon involved in hypophosphite oxidation. Exact function not known. In Stutzerimonas stutzeri (Pseudomonas stutzeri), this protein is Putative C-P lyase subunit protein HtxH (htxH).